Here is a 334-residue protein sequence, read N- to C-terminus: ADP-L-glycero-D-manno-heptose-6-epimerase (334 aa).

Residues 11–12 (FI), 32–33 (DN), Lys-39, Lys-54, 77–81 (QGACS), and Asn-94 contribute to the NADP(+) site. The active-site Proton acceptor is the Tyr-141. Residue Lys-145 participates in NADP(+) binding. Asn-171 lines the substrate pocket. Residues Val-172 and Lys-180 each contribute to the NADP(+) site. Lys-180 acts as the Proton acceptor in catalysis. Residues Arg-182, His-189, 203–206 (FGSN), Arg-216, and Tyr-295 each bind substrate.

This sequence belongs to the NAD(P)-dependent epimerase/dehydratase family. HldD subfamily. Homopentamer. NADP(+) serves as cofactor.

The enzyme catalyses ADP-D-glycero-beta-D-manno-heptose = ADP-L-glycero-beta-D-manno-heptose. It functions in the pathway nucleotide-sugar biosynthesis; ADP-L-glycero-beta-D-manno-heptose biosynthesis; ADP-L-glycero-beta-D-manno-heptose from D-glycero-beta-D-manno-heptose 7-phosphate: step 4/4. Functionally, catalyzes the interconversion between ADP-D-glycero-beta-D-manno-heptose and ADP-L-glycero-beta-D-manno-heptose via an epimerization at carbon 6 of the heptose. In Neisseria gonorrhoeae (strain ATCC 700825 / FA 1090), this protein is ADP-L-glycero-D-manno-heptose-6-epimerase.